Reading from the N-terminus, the 168-residue chain is 2-C-methyl-D-erythritol 2,4-cyclodiphosphate synthase (168 aa).

Positions 15 and 17 each coordinate a divalent metal cation. 4-CDP-2-C-methyl-D-erythritol 2-phosphate-binding positions include 15–17 (DVH) and 45–46 (HS). H53 serves as a coordination point for a divalent metal cation. 4-CDP-2-C-methyl-D-erythritol 2-phosphate is bound by residues 72-76 (FPNSD), F150, and R153.

This sequence belongs to the IspF family. Homotrimer. A divalent metal cation serves as cofactor.

It carries out the reaction 4-CDP-2-C-methyl-D-erythritol 2-phosphate = 2-C-methyl-D-erythritol 2,4-cyclic diphosphate + CMP. The protein operates within isoprenoid biosynthesis; isopentenyl diphosphate biosynthesis via DXP pathway; isopentenyl diphosphate from 1-deoxy-D-xylulose 5-phosphate: step 4/6. Its function is as follows. Involved in the biosynthesis of isopentenyl diphosphate (IPP) and dimethylallyl diphosphate (DMAPP), two major building blocks of isoprenoid compounds. Catalyzes the conversion of 4-diphosphocytidyl-2-C-methyl-D-erythritol 2-phosphate (CDP-ME2P) to 2-C-methyl-D-erythritol 2,4-cyclodiphosphate (ME-CPP) with a corresponding release of cytidine 5-monophosphate (CMP). This chain is 2-C-methyl-D-erythritol 2,4-cyclodiphosphate synthase, found in Anaplasma phagocytophilum (strain HZ).